Here is a 434-residue protein sequence, read N- to C-terminus: 3-phosphoshikimate 1-carboxyvinyltransferase (434 aa).

3 residues coordinate 3-phosphoshikimate: lysine 15, serine 16, and arginine 20. Lysine 15 is a binding site for phosphoenolpyruvate. Residues glycine 96 and arginine 124 each contribute to the phosphoenolpyruvate site. 3-phosphoshikimate is bound by residues serine 169, glutamine 171, serine 195, aspartate 319, and lysine 346. Glutamine 171 is a binding site for phosphoenolpyruvate. The Proton acceptor role is filled by aspartate 319. Arginine 350 and arginine 394 together coordinate phosphoenolpyruvate.

Belongs to the EPSP synthase family. As to quaternary structure, monomer.

It localises to the cytoplasm. The enzyme catalyses 3-phosphoshikimate + phosphoenolpyruvate = 5-O-(1-carboxyvinyl)-3-phosphoshikimate + phosphate. It functions in the pathway metabolic intermediate biosynthesis; chorismate biosynthesis; chorismate from D-erythrose 4-phosphate and phosphoenolpyruvate: step 6/7. Its function is as follows. Catalyzes the transfer of the enolpyruvyl moiety of phosphoenolpyruvate (PEP) to the 5-hydroxyl of shikimate-3-phosphate (S3P) to produce enolpyruvyl shikimate-3-phosphate and inorganic phosphate. The protein is 3-phosphoshikimate 1-carboxyvinyltransferase of Chlorobaculum parvum (strain DSM 263 / NCIMB 8327) (Chlorobium vibrioforme subsp. thiosulfatophilum).